A 299-amino-acid polypeptide reads, in one-letter code: Putative syntaxin-2 (299 aa).

Over 1–270 the chain is Cytoplasmic; it reads MRDRLNEFQS…SAMRKKICVA (270 aa). Residues 112–146 adopt a coiled-coil conformation; the sequence is EKRMRQNQLELLKDNLNKLINLFNETHQDYKSRVS. The region spanning 193-255 is the t-SNARE coiled-coil homology domain; the sequence is YEDVKKRHGE…KQGSANVKTA (63 aa). The helical; Anchor for type IV membrane protein transmembrane segment at 271-291 threads the bilayer; the sequence is AILITILLILIIVAIILAVVL. The Extracellular portion of the chain corresponds to 292 to 299; sequence SRGNNNNK.

Belongs to the syntaxin family.

Its subcellular location is the membrane. Its function is as follows. Potentially involved in docking of synaptic vesicles at presynaptic active zones. This is Putative syntaxin-2 (syx-2) from Caenorhabditis elegans.